Reading from the N-terminus, the 96-residue chain is Co-chaperonin GroES (96 aa).

The protein belongs to the GroES chaperonin family. As to quaternary structure, heptamer of 7 subunits arranged in a ring. Interacts with the chaperonin GroEL.

Its subcellular location is the cytoplasm. Functionally, together with the chaperonin GroEL, plays an essential role in assisting protein folding. The GroEL-GroES system forms a nano-cage that allows encapsulation of the non-native substrate proteins and provides a physical environment optimized to promote and accelerate protein folding. GroES binds to the apical surface of the GroEL ring, thereby capping the opening of the GroEL channel. The protein is Co-chaperonin GroES of Paraburkholderia phymatum (strain DSM 17167 / CIP 108236 / LMG 21445 / STM815) (Burkholderia phymatum).